Here is a 179-residue protein sequence, read N- to C-terminus: Adenine phosphoribosyltransferase (179 aa).

This sequence belongs to the purine/pyrimidine phosphoribosyltransferase family. Homodimer.

Its subcellular location is the cytoplasm. It carries out the reaction AMP + diphosphate = 5-phospho-alpha-D-ribose 1-diphosphate + adenine. The protein operates within purine metabolism; AMP biosynthesis via salvage pathway; AMP from adenine: step 1/1. In terms of biological role, catalyzes a salvage reaction resulting in the formation of AMP, that is energically less costly than de novo synthesis. The chain is Adenine phosphoribosyltransferase from Beijerinckia indica subsp. indica (strain ATCC 9039 / DSM 1715 / NCIMB 8712).